Consider the following 72-residue polypeptide: MLIPWQELSPETLENLIESFVLREGTDYGEHERTLEQKVADVKRQLQCGEAVLVWSELHETVNIMPRSQFRE.

The protein belongs to the UPF0270 family.

In Escherichia fergusonii (strain ATCC 35469 / DSM 13698 / CCUG 18766 / IAM 14443 / JCM 21226 / LMG 7866 / NBRC 102419 / NCTC 12128 / CDC 0568-73), this protein is UPF0270 protein YheU.